We begin with the raw amino-acid sequence, 168 residues long: Outer-membrane lipoprotein YfiB (168 aa).

The signal sequence occupies residues 1 to 25 (MLPQRLHPSRLLALALFSLVLGLAG). Cys26 carries the N-palmitoyl cysteine lipid modification. Cys26 is lipidated: S-diacylglycerol cysteine. The region spanning 53 to 168 (EGWEFGMSSK…RRVAIIVPAE (116 aa)) is the OmpA-like domain.

This sequence belongs to the outer membrane OOP (TC 1.B.6) superfamily. In terms of assembly, homodimer. Interacts with YfiR. The YfiB-YfiR complex is a 2:2 heterotetramer.

The protein resides in the cell outer membrane. Both lipid anchor in the outer membrane and peptidoglycan binding are required for full activity. Once activated by certain cell stress, the dimeric YfiB transforms from a compact conformation to a stretched conformation, allowing the periplasmic domain of the membrane-anchored YfiB to penetrate the cell wall and sequester the YfiR dimer. GMP enhances the binding affinity between YfiB and YfiR. In terms of biological role, activates the diguanylate cyclase TpbB/YfiN by sequestering YfiR at the outer membrane, which counteracts the YfiR-mediated repression of TpbB/YfiN at the inner membrane and leads to increased c-di-GMP production. May act as a sensor of envelope stress. Part of the YfiB-TpbB-YfiR (or yfiBNR) system, encoding a tripartite signaling module that modulates intracellular c-di-GMP levels. The system is a key regulator of the small colony variant (SCV) phenotype, and plays an important role in biofilm formation and in vivo persistence. The c-di-GMP produced by TpbB/YfiN stimulates the production of the Pel and Psl exopolysaccharides, which promotes surface attachment, generates an SCV phenotype and confers resistance against phagocytosis. This is Outer-membrane lipoprotein YfiB from Pseudomonas aeruginosa (strain ATCC 15692 / DSM 22644 / CIP 104116 / JCM 14847 / LMG 12228 / 1C / PRS 101 / PAO1).